A 416-amino-acid chain; its full sequence is Actin-like protein 9 (416 aa).

Residues 1-23 (MDPNQGNPLEPQDSPEIPKPSLN) are disordered.

The protein belongs to the actin family. Interacts with ACTL7A.

It localises to the cytoplasmic vesicle. The protein resides in the secretory vesicle. The protein localises to the acrosome. Its subcellular location is the cytoplasm. It is found in the cytoskeleton. It localises to the perinuclear theca. In terms of biological role, testis-specic protein that plays an important role in fusion of proacrosomal vesicles and perinuclear theca formation. The sequence is that of Actin-like protein 9 (ACTL9) from Bos taurus (Bovine).